The following is a 149-amino-acid chain: Small heat shock protein IbpB (149 aa).

The 112-residue stretch at 26–137 (SQEPIDFPPY…QPQRIAIGGG (112 aa)) folds into the sHSP domain.

It belongs to the small heat shock protein (HSP20) family. As to quaternary structure, homodimer. Forms homomultimers of about 100-150 subunits at optimal growth temperatures. Conformation changes to oligomers at high temperatures or high ionic concentrations. The decrease in size of the multimers is accompanied by an increase in chaperone activity.

The protein localises to the cytoplasm. In terms of biological role, associates with aggregated proteins, together with IbpA, to stabilize and protect them from irreversible denaturation and extensive proteolysis during heat shock and oxidative stress. Aggregated proteins bound to the IbpAB complex are more efficiently refolded and reactivated by the ATP-dependent chaperone systems ClpB and DnaK/DnaJ/GrpE. Its activity is ATP-independent. The protein is Small heat shock protein IbpB of Pectobacterium carotovorum subsp. carotovorum (strain PC1).